Reading from the N-terminus, the 302-residue chain is 4-hydroxy-tetrahydrodipicolinate synthase (302 aa).

Thr-46 is a pyruvate binding site. Catalysis depends on Tyr-134, which acts as the Proton donor/acceptor. Lys-162 functions as the Schiff-base intermediate with substrate in the catalytic mechanism. Residue Val-204 coordinates pyruvate.

Belongs to the DapA family. As to quaternary structure, homotetramer; dimer of dimers.

The protein resides in the cytoplasm. The enzyme catalyses L-aspartate 4-semialdehyde + pyruvate = (2S,4S)-4-hydroxy-2,3,4,5-tetrahydrodipicolinate + H2O + H(+). It functions in the pathway amino-acid biosynthesis; L-lysine biosynthesis via DAP pathway; (S)-tetrahydrodipicolinate from L-aspartate: step 3/4. Catalyzes the condensation of (S)-aspartate-beta-semialdehyde [(S)-ASA] and pyruvate to 4-hydroxy-tetrahydrodipicolinate (HTPA). This Xylella fastidiosa (strain Temecula1 / ATCC 700964) protein is 4-hydroxy-tetrahydrodipicolinate synthase.